The sequence spans 239 residues: Increased recombination centers protein 22-2 (239 aa).

The first 19 residues, M1 to G19, serve as a signal peptide directing secretion. Topologically, residues Y20–L161 are lumenal. A helical membrane pass occupies residues I162–I182. Residues W183 to N239 are Cytoplasmic-facing. The span at A201–S213 shows a compositional bias: low complexity. The segment at A201–T222 is disordered.

The protein belongs to the IRC22 family.

It localises to the endoplasmic reticulum membrane. Functionally, is probably involved in a pathway contributing to genomic integrity. The protein is Increased recombination centers protein 22-2 (IRC22-2) of Candida albicans (strain WO-1) (Yeast).